A 385-amino-acid chain; its full sequence is 6-hydroxynicotinate 3-monooxygenase (385 aa).

Positions M1–A20 are cleaved as a signal peptide. FAD-binding positions include G15, E34–Q35, H47, R108, and L130. H47 (proton acceptor) is an active-site residue. Y215 acts as the Proton acceptor in catalysis. FAD is bound by residues D294 and A307–A308.

The protein belongs to the 6-hydroxynicotinate 3-monooxygenase family. Monomer. The cofactor is FAD.

It catalyses the reaction 6-hydroxynicotinate + NADH + O2 + 2 H(+) = 2,5-dihydroxypyridine + CO2 + NAD(+) + H2O. Its activity is regulated as follows. Inhibited competitively by nicotinic acid with a Ki of 0.49 mM. Inhibited by thiol-specific compounds p-chloromercuribenzoate, DTNB, Ag(2)SO(4), HgCl(2), CuCl(2) and N-ethylmaleimide. No inhibition by o-phenanthroline, 8-hydroxyquinoline, EDTA, disodium 4,5-dihydroxy-m-benzenedisulfonate, fluoride, azide, KCl, LiCl, NaCl, BaCl(2), MnCl(2), MgCl(2), PBCl, ZnCl(2), CoCl(2), SnCl(2), FeSO(4), FeCl(3), NiCl(2), CdCl(2), AlCl(3), iodoacetic acid, hydro-xylamine, phenylhydrazine, semicarbazide, cysteamine, alpha,alpha-dipyridyl and urea. Functionally, flavin-dependent monooxygenase (FMO) that catalyzes the decarboxylative hydroxylation of 6-hydroxynicotinic acid (6-HNA) to 2,5-dihydroxypyridine (2,5-DHP) with concomitant oxidation of NADH, a step in the aerobic nicotinate degradation pathway. Uses NADH in preference to NADPH as an electron donor. The polypeptide is 6-hydroxynicotinate 3-monooxygenase (nicC) (Pseudomonas fluorescens).